Reading from the N-terminus, the 70-residue chain is DNA-directed RNA polymerase subunit omega (70 aa).

This sequence belongs to the RNA polymerase subunit omega family. In terms of assembly, the RNAP catalytic core consists of 2 alpha, 1 beta, 1 beta' and 1 omega subunit. When a sigma factor is associated with the core the holoenzyme is formed, which can initiate transcription.

The catalysed reaction is RNA(n) + a ribonucleoside 5'-triphosphate = RNA(n+1) + diphosphate. Functionally, promotes RNA polymerase assembly. Latches the N- and C-terminal regions of the beta' subunit thereby facilitating its interaction with the beta and alpha subunits. In Staphylococcus epidermidis (strain ATCC 12228 / FDA PCI 1200), this protein is DNA-directed RNA polymerase subunit omega.